A 250-amino-acid polypeptide reads, in one-letter code: 3-deoxy-manno-octulosonate cytidylyltransferase (250 aa).

Belongs to the KdsB family.

The protein localises to the cytoplasm. The catalysed reaction is 3-deoxy-alpha-D-manno-oct-2-ulosonate + CTP = CMP-3-deoxy-beta-D-manno-octulosonate + diphosphate. Its pathway is nucleotide-sugar biosynthesis; CMP-3-deoxy-D-manno-octulosonate biosynthesis; CMP-3-deoxy-D-manno-octulosonate from 3-deoxy-D-manno-octulosonate and CTP: step 1/1. The protein operates within bacterial outer membrane biogenesis; lipopolysaccharide biosynthesis. Activates KDO (a required 8-carbon sugar) for incorporation into bacterial lipopolysaccharide in Gram-negative bacteria. The sequence is that of 3-deoxy-manno-octulosonate cytidylyltransferase from Actinobacillus pleuropneumoniae serotype 7 (strain AP76).